The following is a 684-amino-acid chain: Glycine--tRNA ligase beta subunit (684 aa).

It belongs to the class-II aminoacyl-tRNA synthetase family. Tetramer of two alpha and two beta subunits.

Its subcellular location is the cytoplasm. The enzyme catalyses tRNA(Gly) + glycine + ATP = glycyl-tRNA(Gly) + AMP + diphosphate. The polypeptide is Glycine--tRNA ligase beta subunit (Pseudomonas fluorescens (strain Pf0-1)).